Consider the following 671-residue polypeptide: Phenol 2-monooxygenase (671 aa).

Residues 10–43 (DVLIVGAGPAGVMAAAHLLSYGTTARPHRVRIFD) and 295–305 (LQEGRVFLAGD) contribute to the FAD site.

This sequence belongs to the PheA/TfdB FAD monooxygenase family. The cofactor is FAD.

It is found in the cytoplasm. It catalyses the reaction phenol + NADPH + O2 + H(+) = catechol + NADP(+) + H2O. It participates in aromatic compound metabolism; phenol degradation. Its function is as follows. Hydroxylates phenol to catechol. Also acts on cresols. The chain is Phenol 2-monooxygenase (tbuD) from Ralstonia pickettii (Burkholderia pickettii).